Consider the following 143-residue polypeptide: Nucleoside diphosphate kinase (143 aa).

Lysine 11, phenylalanine 59, arginine 87, threonine 93, arginine 104, and asparagine 114 together coordinate ATP. Histidine 117 (pros-phosphohistidine intermediate) is an active-site residue.

It belongs to the NDK family. Homotetramer. Mg(2+) serves as cofactor.

Its subcellular location is the cytoplasm. The enzyme catalyses a 2'-deoxyribonucleoside 5'-diphosphate + ATP = a 2'-deoxyribonucleoside 5'-triphosphate + ADP. The catalysed reaction is a ribonucleoside 5'-diphosphate + ATP = a ribonucleoside 5'-triphosphate + ADP. Its function is as follows. Major role in the synthesis of nucleoside triphosphates other than ATP. The ATP gamma phosphate is transferred to the NDP beta phosphate via a ping-pong mechanism, using a phosphorylated active-site intermediate. The sequence is that of Nucleoside diphosphate kinase from Azotobacter vinelandii (strain DJ / ATCC BAA-1303).